Consider the following 348-residue polypeptide: UDP-3-O-acylglucosamine N-acyltransferase (348 aa).

Catalysis depends on H241, which acts as the Proton acceptor.

The protein belongs to the transferase hexapeptide repeat family. LpxD subfamily. As to quaternary structure, homotrimer.

It catalyses the reaction a UDP-3-O-[(3R)-3-hydroxyacyl]-alpha-D-glucosamine + a (3R)-hydroxyacyl-[ACP] = a UDP-2-N,3-O-bis[(3R)-3-hydroxyacyl]-alpha-D-glucosamine + holo-[ACP] + H(+). It participates in bacterial outer membrane biogenesis; LPS lipid A biosynthesis. Functionally, catalyzes the N-acylation of UDP-3-O-acylglucosamine using 3-hydroxyacyl-ACP as the acyl donor. Is involved in the biosynthesis of lipid A, a phosphorylated glycolipid that anchors the lipopolysaccharide to the outer membrane of the cell. This chain is UDP-3-O-acylglucosamine N-acyltransferase, found in Neisseria meningitidis serogroup B (strain ATCC BAA-335 / MC58).